The primary structure comprises 381 residues: MAINIRKTHPLLKIMNHALIDLPAPSNISLWWNFGSLLGLCLIIQILTGLFLAMHYTADISMAFSSVVHICRDVNYGWLIRNIHANGASLFFICVYLHIARGLYYGSYLYKETWNIGVILLFLLMATAFVGYVLPWGQMSFWGATVITNLLSAFPYIGNMLVQWIWGGFSVDNATLTRFFAFHFLLPFLILALTVIHLLFLHETGSNNPLGINSDADKISFHPYFSYKDLLGFFVMIFLLATLALFTPNLLGDAENFIPANPLVTPPHIKPEWYFLFAYAILRSIPNKLGGVLALLFSIFILMLVPLLHTSKQRSIIFRPLTQIFFWFLVANSIILTWIGGQPVEQPFIMVGQIASISYFSLFLIIMPFTSWCENKILSLN.

Transmembrane regions (helical) follow at residues 34-54 (FGSLLGLCLIIQILTGLFLAM), 78-99 (WLIRNIHANGASLFFICVYLHI), 114-134 (WNIGVILLFLLMATAFVGYVL), and 179-199 (FFAFHFLLPFLILALTVIHLL). Residues His84 and His98 each contribute to the heme b site. His183 and His197 together coordinate heme b. His202 contacts a ubiquinone. A run of 4 helical transmembrane segments spans residues 227–247 (YKDLLGFFVMIFLLATLALFT), 289–309 (LGGVLALLFSIFILMLVPLLH), 321–341 (LTQIFFWFLVANSIILTWIGG), and 348–368 (FIMVGQIASISYFSLFLIIMP).

It belongs to the cytochrome b family. In terms of assembly, the cytochrome bc1 complex contains 3 respiratory subunits (MT-CYB, CYC1 and UQCRFS1), 2 core proteins (UQCRC1 and UQCRC2) and probably 6 low-molecular weight proteins. Requires heme b as cofactor.

The protein localises to the mitochondrion inner membrane. Its function is as follows. Component of the ubiquinol-cytochrome c reductase complex (complex III or cytochrome b-c1 complex) that is part of the mitochondrial respiratory chain. The b-c1 complex mediates electron transfer from ubiquinol to cytochrome c. Contributes to the generation of a proton gradient across the mitochondrial membrane that is then used for ATP synthesis. The polypeptide is Cytochrome b (mt-cyb) (Negaprion brevirostris (Lemon shark)).